A 335-amino-acid chain; its full sequence is GTPase Obg (335 aa).

One can recognise an Obg domain in the interval 1 to 159; it reads MKFVDSAKIS…YELEMELKLM (159 aa). The OBG-type G domain maps to 160–323; the sequence is ADVGLVGFPN…LKDELWRQVS (164 aa). GTP contacts are provided by residues 166–173, 191–195, 213–216, 280–283, and 304–306; these read GFPNAGKS, FTTLV, DIPG, TKMD, and SSV. Ser173 and Thr193 together coordinate Mg(2+).

Belongs to the TRAFAC class OBG-HflX-like GTPase superfamily. OBG GTPase family. In terms of assembly, monomer. It depends on Mg(2+) as a cofactor.

The protein localises to the cytoplasm. Functionally, an essential GTPase which binds GTP, GDP and possibly (p)ppGpp with moderate affinity, with high nucleotide exchange rates and a fairly low GTP hydrolysis rate. Plays a role in control of the cell cycle, stress response, ribosome biogenesis and in those bacteria that undergo differentiation, in morphogenesis control. The polypeptide is GTPase Obg (Chlorobaculum tepidum (strain ATCC 49652 / DSM 12025 / NBRC 103806 / TLS) (Chlorobium tepidum)).